The primary structure comprises 96 residues: Co-chaperonin GroES (96 aa).

Belongs to the GroES chaperonin family. Heptamer of 7 subunits arranged in a ring. Interacts with the chaperonin GroEL.

The protein localises to the cytoplasm. Functionally, together with the chaperonin GroEL, plays an essential role in assisting protein folding. The GroEL-GroES system forms a nano-cage that allows encapsulation of the non-native substrate proteins and provides a physical environment optimized to promote and accelerate protein folding. GroES binds to the apical surface of the GroEL ring, thereby capping the opening of the GroEL channel. The sequence is that of Co-chaperonin GroES from Paraburkholderia phymatum (strain DSM 17167 / CIP 108236 / LMG 21445 / STM815) (Burkholderia phymatum).